Reading from the N-terminus, the 824-residue chain is Probable receptor-like protein kinase At5g24010 (824 aa).

The signal sequence occupies residues 1–24; sequence MAFPINLTQTLLFFFCPLLHLSFA. Asparagine 6, asparagine 41, asparagine 204, asparagine 227, and asparagine 291 each carry an N-linked (GlcNAc...) asparagine glycan. Residues 25–406 are Extracellular-facing; sequence AFTPTDNYLI…SSEVVSGKRN (382 aa). A helical membrane pass occupies residues 407–427; sequence VVWIVVGSVLGGFVFLSLFFL. The Cytoplasmic portion of the chain corresponds to 428 to 824; it reads SVLCLCRRKN…FSQLMTNAGR (397 aa). Residues 440–467 are disordered; it reads TRSSESTGWTPLRRFRGSSNSRTTERTV. Positions 456–467 are enriched in polar residues; that stretch reads GSSNSRTTERTV. The 276-residue stretch at 489–764 folds into the Protein kinase domain; it reads FDRSLVIGVG…VLWNLEHVLQ (276 aa). ATP is bound by residues 495–503 and lysine 517; that span reads IGVGGFGMV. The Proton acceptor role is filled by aspartate 613. Residues 777 to 803 form a disordered region; it reads DYGDVTDPRTARQGLSNGSNIERDYGD.

This sequence belongs to the protein kinase superfamily. Ser/Thr protein kinase family.

Its subcellular location is the membrane. This chain is Probable receptor-like protein kinase At5g24010, found in Arabidopsis thaliana (Mouse-ear cress).